A 355-amino-acid chain; its full sequence is Probable butyrate kinase (355 aa).

The protein belongs to the acetokinase family.

It localises to the cytoplasm. It catalyses the reaction butanoate + ATP = butanoyl phosphate + ADP. In Listeria welshimeri serovar 6b (strain ATCC 35897 / DSM 20650 / CCUG 15529 / CIP 8149 / NCTC 11857 / SLCC 5334 / V8), this protein is Probable butyrate kinase.